Here is a 107-residue protein sequence, read N- to C-terminus: Sulmotoxin 1 (107 aa).

Residues 1–19 form the signal peptide; it reads MKTLLLALAVVVLVCLGSA. Positions 20 to 34 are excised as a propeptide; that stretch reads NELGLGRQRVDRRRR. Disulfide bonds link cysteine 44–cysteine 68, cysteine 47–cysteine 55, cysteine 61–cysteine 83, cysteine 87–cysteine 98, and cysteine 99–cysteine 104.

Belongs to the three-finger toxin family. Ancestral subfamily. Boigatoxin sub-subfamily. Monomer. Expressed by the venom gland.

It localises to the secreted. In terms of biological role, mammal-specific neurotoxin (tested on mice). Not toxic to lizards (tested on geckos). The polypeptide is Sulmotoxin 1 (Spilotes sulphureus (Amazon puffing snake)).